The chain runs to 284 residues: 2-dehydro-3-deoxyphosphooctonate aldolase (284 aa).

Belongs to the KdsA family.

It localises to the cytoplasm. The catalysed reaction is D-arabinose 5-phosphate + phosphoenolpyruvate + H2O = 3-deoxy-alpha-D-manno-2-octulosonate-8-phosphate + phosphate. The protein operates within carbohydrate biosynthesis; 3-deoxy-D-manno-octulosonate biosynthesis; 3-deoxy-D-manno-octulosonate from D-ribulose 5-phosphate: step 2/3. It functions in the pathway bacterial outer membrane biogenesis; lipopolysaccharide biosynthesis. This is 2-dehydro-3-deoxyphosphooctonate aldolase from Citrobacter koseri (strain ATCC BAA-895 / CDC 4225-83 / SGSC4696).